The sequence spans 315 residues: Glutamyl-Q tRNA(Asp) synthetase (315 aa).

Residues 12-16 and Glu48 each bind L-glutamate; that span reads RFAPS. The short motif at 15–25 is the 'HIGH' region element; it reads PSPSGPLHFGS. Zn(2+) is bound by residues Cys104, Cys106, Tyr124, and Cys128. Tyr181 and Arg199 together coordinate L-glutamate. Positions 237 to 241 match the 'KMSKS' region motif; sequence KLSKQ. Lys240 is an ATP binding site.

Belongs to the class-I aminoacyl-tRNA synthetase family. GluQ subfamily. Requires Zn(2+) as cofactor.

Catalyzes the tRNA-independent activation of glutamate in presence of ATP and the subsequent transfer of glutamate onto a tRNA(Asp). Glutamate is transferred on the 2-amino-5-(4,5-dihydroxy-2-cyclopenten-1-yl) moiety of the queuosine in the wobble position of the QUC anticodon. This is Glutamyl-Q tRNA(Asp) synthetase from Aromatoleum aromaticum (strain DSM 19018 / LMG 30748 / EbN1) (Azoarcus sp. (strain EbN1)).